The primary structure comprises 255 residues: Small ribosomal subunit protein uS2 (255 aa).

It belongs to the universal ribosomal protein uS2 family.

This chain is Small ribosomal subunit protein uS2, found in Geotalea daltonii (strain DSM 22248 / JCM 15807 / FRC-32) (Geobacter daltonii).